A 143-amino-acid polypeptide reads, in one-letter code: Interleukin-3 (143 aa).

A signal peptide spans 1 to 19; that stretch reads MSRLPVLLLLHLLVSPGLQ. C35 and C103 are joined by a disulfide. N89 carries N-linked (GlcNAc...) asparagine glycosylation.

Belongs to the IL-3 family. Monomer. Activated T-cells, mast cells, natural killer cells.

The protein localises to the secreted. In terms of biological role, granulocyte/macrophage colony-stimulating factors are cytokines that act in hematopoiesis by controlling the production, differentiation, and function of 2 related white cell populations of the blood, the granulocytes and the monocytes-macrophages. Its function is as follows. This CSF induces granulocytes, macrophages, mast cells, stem cells, erythroid cells, eosinophils and megakaryocytes. This Macaca mulatta (Rhesus macaque) protein is Interleukin-3 (IL3).